The sequence spans 329 residues: GTP 3',8-cyclase (329 aa).

A Radical SAM core domain is found at alanine 8–alanine 234. Arginine 17 contacts GTP. Residues cysteine 24 and cysteine 28 each contribute to the [4Fe-4S] cluster site. S-adenosyl-L-methionine is bound at residue tyrosine 30. Cysteine 31 contacts [4Fe-4S] cluster. Arginine 68 provides a ligand contact to GTP. Glycine 72 contacts S-adenosyl-L-methionine. A GTP-binding site is contributed by threonine 99. S-adenosyl-L-methionine is bound at residue serine 123. Lysine 160 provides a ligand contact to GTP. An S-adenosyl-L-methionine-binding site is contributed by methionine 194. Residues cysteine 257 and cysteine 260 each coordinate [4Fe-4S] cluster. Arginine 262–arginine 264 lines the GTP pocket. Residue cysteine 274 participates in [4Fe-4S] cluster binding.

This sequence belongs to the radical SAM superfamily. MoaA family. In terms of assembly, monomer and homodimer. [4Fe-4S] cluster serves as cofactor.

It carries out the reaction GTP + AH2 + S-adenosyl-L-methionine = (8S)-3',8-cyclo-7,8-dihydroguanosine 5'-triphosphate + 5'-deoxyadenosine + L-methionine + A + H(+). It functions in the pathway cofactor biosynthesis; molybdopterin biosynthesis. Catalyzes the cyclization of GTP to (8S)-3',8-cyclo-7,8-dihydroguanosine 5'-triphosphate. In Escherichia coli (strain K12 / MC4100 / BW2952), this protein is GTP 3',8-cyclase.